We begin with the raw amino-acid sequence, 436 residues long: GTPase Der (436 aa).

EngA-type G domains follow at residues 4-167 (PTVA…PNEI) and 175-351 (IKFS…HAQN). GTP is bound by residues 10 to 17 (GRPNVGKS), 57 to 61 (DTGGI), 119 to 122 (NKVD), 181 to 188 (GRPNVGKS), 229 to 233 (DTAGM), and 294 to 297 (NKWD). A KH-like domain is found at 352–436 (LRISSSVLND…PVHLIARKRK (85 aa)).

The protein belongs to the TRAFAC class TrmE-Era-EngA-EngB-Septin-like GTPase superfamily. EngA (Der) GTPase family. Associates with the 50S ribosomal subunit.

Its function is as follows. GTPase that plays an essential role in the late steps of ribosome biogenesis. The polypeptide is GTPase Der (Lactococcus lactis subsp. lactis (strain IL1403) (Streptococcus lactis)).